A 170-amino-acid polypeptide reads, in one-letter code: Translationally-controlled tumor protein homolog (170 aa).

Positions 1-170 (MIIYKDLLSG…FKDGLEIEKC (170 aa)) constitute a TCTP domain.

This sequence belongs to the TCTP family.

The protein resides in the cytoplasm. In terms of biological role, involved in calcium binding and microtubule stabilization. This is Translationally-controlled tumor protein homolog (tpt1) from Scophthalmus maximus (Turbot).